The sequence spans 384 residues: WAT1-related protein At4g08290 (384 aa).

10 consecutive transmembrane segments (helical) span residues 15-35 (LLMIFLQFGAAGTYIVIMATL), 43-63 (VVIVYRNLVAALVLAPFALIF), 73-93 (LSVLWKIMALGFLEPVLDQGF), 104-124 (TYTSAIMNILPSVTFIIAWIL), 140-160 (IIGTLVGLGGALVMTLYKGPL), 186-206 (WVVGTLLILLGCVAWSGFYVL), 219-239 (SLSALICLAGAVQSFAVALVV), 255-275 (FAPLYTGIVSSGITYYVQGMV), 282-302 (VFVTAFNPLCMILVALIASFI), and 307-327 (IHFGCVIGGAVIAAGLYMVVW). 2 consecutive EamA domains span residues 25–154 (AGTY…LVMT) and 198–326 (VAWS…YMVV).

It belongs to the drug/metabolite transporter (DMT) superfamily. Plant drug/metabolite exporter (P-DME) (TC 2.A.7.4) family.

Its subcellular location is the membrane. The protein is WAT1-related protein At4g08290 of Arabidopsis thaliana (Mouse-ear cress).